Here is a 90-residue protein sequence, read N- to C-terminus: MKKVLVKAVHCYQRWISPALPPACRYYPTCSNYMIQAIEKHGPDKGLAMGTARILRCHPFCQPGYDLVPEHFSLRRNWAEPEKKEEEDSK.

It belongs to the UPF0161 family.

Its subcellular location is the cell membrane. Its function is as follows. Could be involved in insertion of integral membrane proteins into the membrane. This chain is Putative membrane protein insertion efficiency factor, found in Lactococcus lactis subsp. cremoris (strain MG1363).